Reading from the N-terminus, the 694-residue chain is Potassium-transporting ATPase ATP-binding subunit (694 aa).

4 consecutive transmembrane segments (helical) span residues 36–56 (VMFV…RDLI), 62–82 (LAFS…ANFA), 218–238 (IALN…TATI), and 249–269 (IPII…IGAL). D306 serves as the catalytic 4-aspartylphosphate intermediate. Residues D343, E347, 376-383 (FTAQTRMS), and K394 each bind ATP. Mg(2+) contacts are provided by D530 and D534. A run of 3 helical transmembrane segments spans residues 600–620 (FAII…LNVM), 628–648 (AILS…PLSL), and 666–686 (LVIY…LIDL).

This sequence belongs to the cation transport ATPase (P-type) (TC 3.A.3) family. Type IA subfamily. In terms of assembly, the system is composed of three essential subunits: KdpA, KdpB and KdpC.

The protein localises to the cell inner membrane. It carries out the reaction K(+)(out) + ATP + H2O = K(+)(in) + ADP + phosphate + H(+). Its function is as follows. Part of the high-affinity ATP-driven potassium transport (or Kdp) system, which catalyzes the hydrolysis of ATP coupled with the electrogenic transport of potassium into the cytoplasm. This subunit is responsible for energy coupling to the transport system and for the release of the potassium ions to the cytoplasm. The chain is Potassium-transporting ATPase ATP-binding subunit from Agrobacterium fabrum (strain C58 / ATCC 33970) (Agrobacterium tumefaciens (strain C58)).